The primary structure comprises 180 residues: Large ribosomal subunit protein uL5 (180 aa).

Belongs to the universal ribosomal protein uL5 family. Part of the 50S ribosomal subunit; part of the 5S rRNA/L5/L18/L25 subcomplex. Contacts the 5S rRNA and the P site tRNA. Forms a bridge to the 30S subunit in the 70S ribosome.

This is one of the proteins that bind and probably mediate the attachment of the 5S RNA into the large ribosomal subunit, where it forms part of the central protuberance. In the 70S ribosome it contacts protein S13 of the 30S subunit (bridge B1b), connecting the 2 subunits; this bridge is implicated in subunit movement. Contacts the P site tRNA; the 5S rRNA and some of its associated proteins might help stabilize positioning of ribosome-bound tRNAs. In Streptococcus sanguinis (strain SK36), this protein is Large ribosomal subunit protein uL5.